The sequence spans 406 residues: Transcriptional activator NprA (406 aa).

4 TPR repeats span residues 125 to 158, 206 to 239, 246 to 279, and 285 to 318; these read YYYY…FRSQ, AECH…AQII, GTIE…KRNS, and FITL…LKRE.

Activates the transcription of nprS by about five fold. May bind to the upstream region of nprS promoter. This chain is Transcriptional activator NprA (nprA), found in Geobacillus stearothermophilus (Bacillus stearothermophilus).